The primary structure comprises 206 residues: Protein-methionine-sulfoxide reductase heme-binding subunit MsrQ (206 aa).

A run of 6 helical transmembrane segments spans residues 14-34 (IKPL…WLGA), 45-65 (FLTR…LAIT), 82-102 (MCGL…VWWD), 118-138 (PFIT…ATST), 149-169 (WQTL…HFWW), and 179-199 (QPLL…AAWW).

This sequence belongs to the MsrQ family. As to quaternary structure, heterodimer of a catalytic subunit (MsrP) and a heme-binding subunit (MsrQ). Requires FMN as cofactor. The cofactor is heme b.

The protein localises to the cell inner membrane. Its function is as follows. Part of the MsrPQ system that repairs oxidized periplasmic proteins containing methionine sulfoxide residues (Met-O), using respiratory chain electrons. Thus protects these proteins from oxidative-stress damage caused by reactive species of oxygen and chlorine generated by the host defense mechanisms. MsrPQ is essential for the maintenance of envelope integrity under bleach stress, rescuing a wide series of structurally unrelated periplasmic proteins from methionine oxidation. MsrQ provides electrons for reduction to the reductase catalytic subunit MsrP, using the quinone pool of the respiratory chain. The chain is Protein-methionine-sulfoxide reductase heme-binding subunit MsrQ from Bordetella pertussis (strain Tohama I / ATCC BAA-589 / NCTC 13251).